Consider the following 644-residue polypeptide: Type III restriction-modification enzyme EcoP15I Mod subunit (644 aa).

The tract at residues 123-126 (DPPY) is binding of S-adenosyl methionine.

This sequence belongs to the N(4)/N(6)-methyltransferase family. As to quaternary structure, forms a homodimer capable of methylating the target sequence in the absence of Res. A heterotetramer with stoichiometry Res(2)Mod(2). A heterotrimer with stoichiometry Res(1)Mod(2).

It carries out the reaction a 2'-deoxyadenosine in DNA + S-adenosyl-L-methionine = an N(6)-methyl-2'-deoxyadenosine in DNA + S-adenosyl-L-homocysteine + H(+). A beta subtype methylase that binds the system-specific DNA recognition site 5'-CAGCAG-3' and methylates A-5 (of only 1 strand as the other does not have an A residue). DNA restriction requires both the Res and Mod subunits. The A-5 nucleotide flips into the catalytic pocket of one Mod subunit for modification, while the other Mod subunit makes most of the DNA sequence-specific contacts. This Escherichia coli protein is Type III restriction-modification enzyme EcoP15I Mod subunit.